The following is a 376-amino-acid chain: Lipid-A-disaccharide synthase (376 aa).

Belongs to the LpxB family.

It carries out the reaction a lipid X + a UDP-2-N,3-O-bis[(3R)-3-hydroxyacyl]-alpha-D-glucosamine = a lipid A disaccharide + UDP + H(+). It participates in bacterial outer membrane biogenesis; LPS lipid A biosynthesis. In terms of biological role, condensation of UDP-2,3-diacylglucosamine and 2,3-diacylglucosamine-1-phosphate to form lipid A disaccharide, a precursor of lipid A, a phosphorylated glycolipid that anchors the lipopolysaccharide to the outer membrane of the cell. The chain is Lipid-A-disaccharide synthase from Coxiella burnetii (strain Dugway 5J108-111).